Here is a 133-residue protein sequence, read N- to C-terminus: MAEWHKIIEDISKNNKFEDAAIVDYKTTKNVLAAIPNRTFAKINPGEIIPLITNRNILKPLIGQKYCIVYTNSLMDENTYAMELLTGYAPVSPIVIARTHTALIFLMGKPTTSRRDVYRTCRDHATRVRATGN.

The protein belongs to the profilin family.

More likely to influence phosphoinositide metabolism than actin assembly. In Vaccinia virus (strain Tian Tan) (VACV), this protein is Profilin.